A 360-amino-acid chain; its full sequence is Peptide chain release factor 1 (360 aa).

Residue Gln235 is modified to N5-methylglutamine. The segment at 284–313 (AKRQQAEASTRRNLLGSGDRSDRNRTYNFP) is disordered.

The protein belongs to the prokaryotic/mitochondrial release factor family. Methylated by PrmC. Methylation increases the termination efficiency of RF1.

The protein localises to the cytoplasm. Its function is as follows. Peptide chain release factor 1 directs the termination of translation in response to the peptide chain termination codons UAG and UAA. The chain is Peptide chain release factor 1 from Salmonella arizonae (strain ATCC BAA-731 / CDC346-86 / RSK2980).